The sequence spans 1196 residues: Phosphatidylinositol-3,5-bisphosphate 3-phosphatase MTMR3 (1196 aa).

Residue serine 8 is modified to Phosphoserine. A Myotubularin phosphatase domain is found at 155–576 (EHVTSRFKNE…RNLMLWSAVY (422 aa)). Residues asparagine 326, asparagine 351, and isoleucine 352 each coordinate a 1,2-diacyl-sn-glycero-3-phospho-(1D-myo-inositol-3,5-bisphosphate). Residues asparagine 326, asparagine 351, and isoleucine 352 each coordinate a 1,2-diacyl-sn-glycero-3-phospho-(1D-myo-inositol-3-phosphate). Cysteine 413 (phosphocysteine intermediate) is an active-site residue. A 1,2-diacyl-sn-glycero-3-phospho-(1D-myo-inositol-3,5-bisphosphate) is bound by residues serine 414, aspartate 415, glycine 416, tryptophan 417, aspartate 418, arginine 419, lysine 455, and arginine 459. Residues serine 414, aspartate 415, glycine 416, tryptophan 417, aspartate 418, and arginine 419 each contribute to the a 1,2-diacyl-sn-glycero-3-phospho-(1D-myo-inositol-3-phosphate) site. A 1,2-diacyl-sn-glycero-3-phospho-(1D-myo-inositol-3-phosphate) is bound at residue arginine 459. A disordered region spans residues 587–612 (DDSCAPYPVPGTSPDEPPLSRLPKTR). The span at 593–603 (YPVPGTSPDEP) shows a compositional bias: pro residues. Phosphoserine occurs at positions 613, 633, 647, and 651. Disordered stretches follow at residues 697–719 (TKEESGVEEPTHRGHTEVPEVKE) and 855–900 (ESGP…HRTS). Serine 907 is subject to Phosphoserine. Polar residues predominate over residues 993–1008 (NSHSGRPSTTSSPDQP). The interval 993 to 1019 (NSHSGRPSTTSSPDQPSRSHLDDDGMP) is disordered. A coiled-coil region spans residues 1027 to 1060 (QRLRQIESGHQQEVETLKKQVQELKSRLESQYLT). Serine 1062 is modified (phosphoserine). The segment at 1117 to 1177 (DHLAAHCYAC…VCKSCYSSLH (61 aa)) adopts an FYVE-type zinc-finger fold. Zn(2+)-binding residues include cysteine 1123, cysteine 1126, cysteine 1139, cysteine 1142, cysteine 1147, cysteine 1150, cysteine 1169, and cysteine 1172.

This sequence belongs to the protein-tyrosine phosphatase family. Non-receptor class myotubularin subfamily. Forms heterodimers with MTMR4 that recruit both CEP55 and PLK1; occurs during early mitosis, regulates the phosphorylation of CEP55 by PLK1 and its recruitment to the midbody where it mediates cell abscission.

The protein resides in the cytoplasm. It localises to the cytosol. It is found in the membrane. It catalyses the reaction a 1,2-diacyl-sn-glycero-3-phospho-(1D-myo-inositol-3,5-bisphosphate) + H2O = a 1,2-diacyl-sn-glycero-3-phospho-(1D-myo-inositol-5-phosphate) + phosphate. The enzyme catalyses a 1,2-diacyl-sn-glycero-3-phospho-(1D-myo-inositol-3-phosphate) + H2O = a 1,2-diacyl-sn-glycero-3-phospho-(1D-myo-inositol) + phosphate. It carries out the reaction 1,2-dihexadecanoyl-sn-glycero-3-phospho-(1D-myo-inositol-3-phosphate) + H2O = 1,2-dihexadecanoyl-sn-glycero-3-phospho-(1D-myo-inositol) + phosphate. The catalysed reaction is 1,2-dioctanoyl-sn-glycero-3-phospho-(1-D-myo-inositol-3-phosphate) + H2O = 1,2-dioctanoyl-sn-glycero-3-phospho-(1D-myo-inositol) + phosphate. It catalyses the reaction 1,2-dihexadecanoyl-sn-glycero-3-phospho-(1D-myo-inositol-3,5-phosphate) + H2O = 1,2-dihexadecanoyl-sn-glycero-3-phospho-(1D-myo-inositol-5-phosphate) + phosphate. Lipid phosphatase that specifically dephosphorylates the D-3 position of phosphatidylinositol 3-phosphate and phosphatidylinositol 3,5-bisphosphate, generating phosphatidylinositol and phosphatidylinositol 5-phosphate. Decreases the levels of phosphatidylinositol 3-phosphate, a phospholipid found in cell membranes where it acts as key regulator of both cell signaling and intracellular membrane traffic. Could also have a molecular sequestering/adapter activity and regulate biological processes independently of its phosphatase activity. It includes the regulation of midbody abscission during mitotic cytokinesis. The sequence is that of Phosphatidylinositol-3,5-bisphosphate 3-phosphatase MTMR3 from Mus musculus (Mouse).